Here is a 309-residue protein sequence, read N- to C-terminus: Acetyl-coenzyme A carboxylase carboxyl transferase subunit beta (309 aa).

Residues 27–296 enclose the CoA carboxyltransferase N-terminal domain; the sequence is LWKKCPKCGA…PGTEAPIEFE (270 aa). Zn(2+)-binding residues include cysteine 31, cysteine 34, cysteine 50, and cysteine 53. The C4-type zinc-finger motif lies at 31–53; the sequence is CPKCGAFLYKPELEKNLDVCPKC. Positions 288–309 are disordered; that stretch reads GTEAPIEFEVTEKPDVDEPEGQ.

It belongs to the AccD/PCCB family. As to quaternary structure, acetyl-CoA carboxylase is a heterohexamer composed of biotin carboxyl carrier protein (AccB), biotin carboxylase (AccC) and two subunits each of ACCase subunit alpha (AccA) and ACCase subunit beta (AccD). Requires Zn(2+) as cofactor.

Its subcellular location is the cytoplasm. The catalysed reaction is N(6)-carboxybiotinyl-L-lysyl-[protein] + acetyl-CoA = N(6)-biotinyl-L-lysyl-[protein] + malonyl-CoA. It functions in the pathway lipid metabolism; malonyl-CoA biosynthesis; malonyl-CoA from acetyl-CoA: step 1/1. Its function is as follows. Component of the acetyl coenzyme A carboxylase (ACC) complex. Biotin carboxylase (BC) catalyzes the carboxylation of biotin on its carrier protein (BCCP) and then the CO(2) group is transferred by the transcarboxylase to acetyl-CoA to form malonyl-CoA. This Marinobacter nauticus (strain ATCC 700491 / DSM 11845 / VT8) (Marinobacter aquaeolei) protein is Acetyl-coenzyme A carboxylase carboxyl transferase subunit beta.